A 302-amino-acid polypeptide reads, in one-letter code: Quinolinate synthase (302 aa).

Iminosuccinate contacts are provided by histidine 24 and serine 41. A [4Fe-4S] cluster-binding site is contributed by cysteine 86. Residues 112-114 and serine 129 contribute to the iminosuccinate site; that span reads YVN. Cysteine 173 provides a ligand contact to [4Fe-4S] cluster. Iminosuccinate contacts are provided by residues 199–201 and threonine 216; that span reads HPE. Cysteine 259 is a [4Fe-4S] cluster binding site.

Belongs to the quinolinate synthase family. Type 2 subfamily. [4Fe-4S] cluster serves as cofactor.

The protein localises to the cytoplasm. It carries out the reaction iminosuccinate + dihydroxyacetone phosphate = quinolinate + phosphate + 2 H2O + H(+). The protein operates within cofactor biosynthesis; NAD(+) biosynthesis; quinolinate from iminoaspartate: step 1/1. Its function is as follows. Catalyzes the condensation of iminoaspartate with dihydroxyacetone phosphate to form quinolinate. The protein is Quinolinate synthase of Thermococcus kodakarensis (strain ATCC BAA-918 / JCM 12380 / KOD1) (Pyrococcus kodakaraensis (strain KOD1)).